A 563-amino-acid polypeptide reads, in one-letter code: Bifunctional dihydrofolate reductase-thymidylate synthase (563 aa).

A DHFR domain is found at 3–195 (KFNIIAAINN…ILLRFQEYSV (193 aa)). 117-124 (GGGVIYDL) provides a ligand contact to NADP(+). The thymidylate synthase stretch occupies residues 275–563 (YIELVKTIME…CPSISAEMIA (289 aa)). Arg292 is a dUMP binding site. Residue Cys435 is part of the active site. Residues His436, 464–468 (QRSWD), Asn474, and 504–506 (HIY) each bind dUMP.

It in the N-terminal section; belongs to the dihydrofolate reductase family. In the C-terminal section; belongs to the thymidylate synthase family.

The catalysed reaction is (6S)-5,6,7,8-tetrahydrofolate + NADP(+) = 7,8-dihydrofolate + NADPH + H(+). It catalyses the reaction dUMP + (6R)-5,10-methylene-5,6,7,8-tetrahydrofolate = 7,8-dihydrofolate + dTMP. It participates in cofactor biosynthesis; tetrahydrofolate biosynthesis; 5,6,7,8-tetrahydrofolate from 7,8-dihydrofolate: step 1/1. Its function is as follows. Bifunctional enzyme. Involved in de novo dTMP biosynthesis. Key enzyme in folate metabolism. Catalyzes an essential reaction for de novo glycine and purine synthesis, DNA precursor synthesis, and for the conversion of dUMP to dTMP. This Acanthamoeba polyphaga mimivirus (APMV) protein is Bifunctional dihydrofolate reductase-thymidylate synthase.